Reading from the N-terminus, the 469-residue chain is Tryptophan biosynthesis protein TrpCF (469 aa).

The segment at 1–257 is indole-3-glycerol phosphate synthase; sequence MNSILKEIIN…EAVCKMILGN (257 aa). The segment at 258 to 469 is N-(5'-phosphoribosyl)anthranilate isomerase; that stretch reads NKICGLTQSS…YRNLICLGKK (212 aa).

In the N-terminal section; belongs to the TrpC family. The protein in the C-terminal section; belongs to the TrpF family. Monomer.

The enzyme catalyses N-(5-phospho-beta-D-ribosyl)anthranilate = 1-(2-carboxyphenylamino)-1-deoxy-D-ribulose 5-phosphate. The catalysed reaction is 1-(2-carboxyphenylamino)-1-deoxy-D-ribulose 5-phosphate + H(+) = (1S,2R)-1-C-(indol-3-yl)glycerol 3-phosphate + CO2 + H2O. It participates in amino-acid biosynthesis; L-tryptophan biosynthesis; L-tryptophan from chorismate: step 3/5. Its pathway is amino-acid biosynthesis; L-tryptophan biosynthesis; L-tryptophan from chorismate: step 4/5. Bifunctional enzyme that catalyzes two sequential steps of tryptophan biosynthetic pathway. The first reaction is catalyzed by the isomerase, coded by the TrpF domain; the second reaction is catalyzed by the synthase, coded by the TrpC domain. In Buchnera aphidicola subsp. Baizongia pistaciae (strain Bp), this protein is Tryptophan biosynthesis protein TrpCF (trpC).